The following is a 177-amino-acid chain: Ecotin (177 aa).

Positions 1–23 (MQASIQNRIFFGLVVLWSTTVLE) are cleaved as a signal peptide. Residues Cys83 and Cys122 are joined by a disulfide bond.

Belongs to the protease inhibitor I11 (ecotin) family. As to quaternary structure, homodimer.

The protein resides in the periplasm. Its function is as follows. General inhibitor of family S1 serine proteases. This Prochlorococcus marinus (strain MIT 9313) protein is Ecotin.